Reading from the N-terminus, the 312-residue chain is 4-diphosphocytidyl-2-C-methyl-D-erythritol kinase (312 aa).

Residue Lys-18 is part of the active site. Pro-104–Ala-114 serves as a coordination point for ATP. Asp-146 is an active-site residue.

This sequence belongs to the GHMP kinase family. IspE subfamily.

It carries out the reaction 4-CDP-2-C-methyl-D-erythritol + ATP = 4-CDP-2-C-methyl-D-erythritol 2-phosphate + ADP + H(+). It functions in the pathway isoprenoid biosynthesis; isopentenyl diphosphate biosynthesis via DXP pathway; isopentenyl diphosphate from 1-deoxy-D-xylulose 5-phosphate: step 3/6. In terms of biological role, catalyzes the phosphorylation of the position 2 hydroxy group of 4-diphosphocytidyl-2C-methyl-D-erythritol. This is 4-diphosphocytidyl-2-C-methyl-D-erythritol kinase from Clavibacter michiganensis subsp. michiganensis (strain NCPPB 382).